The primary structure comprises 629 residues: tRNA uridine 5-carboxymethylaminomethyl modification enzyme MnmG (629 aa).

13–18 contributes to the FAD binding site; that stretch reads GGGHAG. 273 to 287 provides a ligand contact to NAD(+); that stretch reads GPRYCPSIEDKIHRF.

The protein belongs to the MnmG family. As to quaternary structure, homodimer. Heterotetramer of two MnmE and two MnmG subunits. Requires FAD as cofactor.

It is found in the cytoplasm. NAD-binding protein involved in the addition of a carboxymethylaminomethyl (cmnm) group at the wobble position (U34) of certain tRNAs, forming tRNA-cmnm(5)s(2)U34. This chain is tRNA uridine 5-carboxymethylaminomethyl modification enzyme MnmG, found in Shewanella denitrificans (strain OS217 / ATCC BAA-1090 / DSM 15013).